Consider the following 467-residue polypeptide: ATP-dependent protease ATPase subunit HslU (467 aa).

ATP contacts are provided by residues valine 22 and glycine 64–glutamate 69. The disordered stretch occupies residues glutamine 149–glutamate 192. Residues glutamate 178 to glutamate 192 are compositionally biased toward basic and acidic residues. The ATP site is built by aspartate 280, glutamate 345, and arginine 417.

This sequence belongs to the ClpX chaperone family. HslU subfamily. A double ring-shaped homohexamer of HslV is capped on each side by a ring-shaped HslU homohexamer. The assembly of the HslU/HslV complex is dependent on binding of ATP.

It localises to the cytoplasm. In terms of biological role, ATPase subunit of a proteasome-like degradation complex; this subunit has chaperone activity. The binding of ATP and its subsequent hydrolysis by HslU are essential for unfolding of protein substrates subsequently hydrolyzed by HslV. HslU recognizes the N-terminal part of its protein substrates and unfolds these before they are guided to HslV for hydrolysis. The sequence is that of ATP-dependent protease ATPase subunit HslU from Staphylococcus aureus (strain Mu3 / ATCC 700698).